A 470-amino-acid chain; its full sequence is uncharacterized protein (470 aa).

Residues 1–337 (MKFGHDFKRA…SLTAQPLFFQ (337 aa)) enclose the SPX domain. Positions 118–145 (ASNVPSTPSDSTQQPPTNTLPSVSASSQ) are disordered. Residues 122–136 (PSTPSDSTQQPPTNT) show a composition bias toward low complexity. The RING-type zinc-finger motif lies at 374–413 (CAICSNVAYKPVRLGCSHVFCLHCLIILQKQKVDFCPLCR).

The protein localises to the cytoplasm. This is an uncharacterized protein from Schizosaccharomyces pombe (strain 972 / ATCC 24843) (Fission yeast).